The primary structure comprises 185 residues: Capsid protein (185 aa).

A disordered region spans residues 136–185; that stretch reads NAPILSTLPETTVVRRRDRGRSPRRRTPSPRRRRSQSPRRRRSQSRESQC. Residues 149 to 178 are compositionally biased toward basic residues; that stretch reads VRRRDRGRSPRRRTPSPRRRRSQSPRRRRS. Phosphoserine; by host is present on residues Ser-157, Ser-164, and Ser-172. The 1; half-length repeat unit spans residues 157–163; the sequence is SPRRRTP. The 3 X 8 AA repeats of S-P-R-R-R-[PR]-S-Q stretch occupies residues 157 to 179; it reads SPRRRTPSPRRRRSQSPRRRRSQ. The Bipartite nuclear localization signal signature appears at 160-177; that stretch reads RRTPSPRRRRSQSPRRRR. Repeat copies occupy residues 164–171 and 172–179. Residues 179–185 are RNA binding; it reads QSRESQC.

The protein belongs to the orthohepadnavirus core antigen family. In terms of assembly, homodimerizes, then multimerizes. Interacts with cytosol exposed regions of viral L glycoprotein present in the reticulum-to-Golgi compartment. Interacts with human FLNB. Phosphorylated form interacts with host importin alpha; this interaction depends on the exposure of the NLS, which itself depends upon genome maturation and/or phosphorylation of the capsid protein. Interacts with host NUP153. Post-translationally, phosphorylated by host SRPK1, SRPK2, and maybe protein kinase C or GAPDH. Phosphorylation is critical for pregenomic RNA packaging. Protein kinase C phosphorylation is stimulated by HBx protein and may play a role in transport of the viral genome to the nucleus at the late step during the viral replication cycle.

Its subcellular location is the virion. The protein localises to the host cytoplasm. Its function is as follows. Self assembles to form an icosahedral capsid. Most capsids appear to be large particles with an icosahedral symmetry of T=4 and consist of 240 copies of capsid protein, though a fraction forms smaller T=3 particles consisting of 180 capsid proteins. Entering capsids are transported along microtubules to the nucleus. Phosphorylation of the capsid is thought to induce exposure of nuclear localization signal in the C-terminal portion of the capsid protein that allows binding to the nuclear pore complex via the importin (karyopherin-) alpha and beta. Capsids are imported in intact form through the nuclear pore into the nuclear basket, where it probably binds NUP153. Only capsids that contain the mature viral genome can release the viral DNA and capsid protein into the nucleoplasm. Immature capsids get stuck in the basket. Capsids encapsulate the pre-genomic RNA and the P protein. Pre-genomic RNA is reverse-transcribed into DNA while the capsid is still in the cytoplasm. The capsid can then either be directed to the nucleus, providing more genomes for transcription, or bud through the endoplasmic reticulum to provide new virions. The polypeptide is Capsid protein (Hepatitis B virus genotype A1 subtype adw (isolate Philippines/pFDW294/1988) (HBV-A)).